A 177-amino-acid chain; its full sequence is Large ribosomal subunit protein uL10 (177 aa).

This sequence belongs to the universal ribosomal protein uL10 family. In terms of assembly, part of the ribosomal stalk of the 50S ribosomal subunit. The N-terminus interacts with L11 and the large rRNA to form the base of the stalk. The C-terminus forms an elongated spine to which L12 dimers bind in a sequential fashion forming a multimeric L10(L12)X complex.

Forms part of the ribosomal stalk, playing a central role in the interaction of the ribosome with GTP-bound translation factors. This Thermoanaerobacter pseudethanolicus (strain ATCC 33223 / 39E) (Clostridium thermohydrosulfuricum) protein is Large ribosomal subunit protein uL10.